The chain runs to 465 residues: Mitochondrial F-box protein MFB1 (465 aa).

The F-box domain occupies 14 to 60 (ERSLTNLPLNLLFRILSHLDMNDLQNIGKTCTLLRMLANENIVYRNA). Residues 253–279 (FTKSRDPDYKEMTPTSTESSDSITRLR) form a disordered region. The span at 254-263 (TKSRDPDYKE) shows a compositional bias: basic and acidic residues. The segment covering 265–275 (TPTSTESSDSI) has biased composition (polar residues).

The protein resides in the mitochondrion. The sequence is that of Mitochondrial F-box protein MFB1 (MFB1) from Saccharomyces cerevisiae (strain ATCC 204508 / S288c) (Baker's yeast).